Consider the following 301-residue polypeptide: ATP synthase subunit gamma, mitochondrial (301 aa).

Belongs to the ATPase gamma chain family. In terms of assembly, F-type ATPases have 2 components, CF(1) - the catalytic core - and CF(0) - the membrane proton channel. CF(1) has five subunits: alpha(3), beta(3), gamma(1), delta(1), epsilon(1). CF(0) has three main subunits: a, b and c.

The protein localises to the mitochondrion. It localises to the mitochondrion inner membrane. Its function is as follows. Mitochondrial membrane ATP synthase (F(1)F(0) ATP synthase or Complex V) produces ATP from ADP in the presence of a proton gradient across the membrane which is generated by electron transport complexes of the respiratory chain. F-type ATPases consist of two structural domains, F(1) - containing the extramembraneous catalytic core, and F(0) - containing the membrane proton channel, linked together by a central stalk and a peripheral stalk. During catalysis, ATP synthesis in the catalytic domain of F(1) is coupled via a rotary mechanism of the central stalk subunits to proton translocation. Part of the complex F(1) domain and the central stalk which is part of the complex rotary element. The gamma subunit protrudes into the catalytic domain formed of alpha(3)beta(3). Rotation of the central stalk against the surrounding alpha(3)beta(3) subunits leads to hydrolysis of ATP in three separate catalytic sites on the beta subunits. This is ATP synthase subunit gamma, mitochondrial (atp3) from Schizosaccharomyces pombe (strain 972 / ATCC 24843) (Fission yeast).